The primary structure comprises 279 residues: Shikimate dehydrogenase (NADP(+)) (279 aa).

Residues 20 to 22 and threonine 67 contribute to the shikimate site; that span reads SRS. Lysine 71 functions as the Proton acceptor in the catalytic mechanism. Residue aspartate 83 coordinates NADP(+). 2 residues coordinate shikimate: asparagine 92 and aspartate 108. NADP(+) is bound by residues 134 to 138 and leucine 223; that span reads GAGGA. Residue tyrosine 225 coordinates shikimate. Residue glycine 246 participates in NADP(+) binding.

This sequence belongs to the shikimate dehydrogenase family. As to quaternary structure, homodimer.

It catalyses the reaction shikimate + NADP(+) = 3-dehydroshikimate + NADPH + H(+). The protein operates within metabolic intermediate biosynthesis; chorismate biosynthesis; chorismate from D-erythrose 4-phosphate and phosphoenolpyruvate: step 4/7. Involved in the biosynthesis of the chorismate, which leads to the biosynthesis of aromatic amino acids. Catalyzes the reversible NADPH linked reduction of 3-dehydroshikimate (DHSA) to yield shikimate (SA). This chain is Shikimate dehydrogenase (NADP(+)), found in Cereibacter sphaeroides (strain ATCC 17023 / DSM 158 / JCM 6121 / CCUG 31486 / LMG 2827 / NBRC 12203 / NCIMB 8253 / ATH 2.4.1.) (Rhodobacter sphaeroides).